A 264-amino-acid chain; its full sequence is Acyl-[acyl-carrier-protein]--UDP-N-acetylglucosamine O-acyltransferase (264 aa).

This sequence belongs to the transferase hexapeptide repeat family. LpxA subfamily. Homotrimer.

It is found in the cytoplasm. It carries out the reaction a (3R)-hydroxyacyl-[ACP] + UDP-N-acetyl-alpha-D-glucosamine = a UDP-3-O-[(3R)-3-hydroxyacyl]-N-acetyl-alpha-D-glucosamine + holo-[ACP]. Its pathway is glycolipid biosynthesis; lipid IV(A) biosynthesis; lipid IV(A) from (3R)-3-hydroxytetradecanoyl-[acyl-carrier-protein] and UDP-N-acetyl-alpha-D-glucosamine: step 1/6. Involved in the biosynthesis of lipid A, a phosphorylated glycolipid that anchors the lipopolysaccharide to the outer membrane of the cell. This is Acyl-[acyl-carrier-protein]--UDP-N-acetylglucosamine O-acyltransferase from Glaesserella parasuis serovar 5 (strain SH0165) (Haemophilus parasuis).